Reading from the N-terminus, the 317-residue chain is NADH-ubiquinone oxidoreductase chain 1 (317 aa).

The next 9 membrane-spanning stretches (helical) occupy residues 3 to 23 (YIEL…LTVA), 37 to 57 (PNAV…KLLL), 69 to 89 (LILF…WSVI), 103 to 123 (GFIL…LAGW), 141 to 161 (LISY…IGGT), 173 to 193 (AIWY…GCVA), 207 to 227 (SELV…LFFL), 247 to 267 (GGTG…YIWV), and 282 to 302 (LCWM…PAYL).

It belongs to the complex I subunit 1 family.

The protein resides in the mitochondrion inner membrane. It carries out the reaction a ubiquinone + NADH + 5 H(+)(in) = a ubiquinol + NAD(+) + 4 H(+)(out). Functionally, core subunit of the mitochondrial membrane respiratory chain NADH dehydrogenase (Complex I) that is believed to belong to the minimal assembly required for catalysis. Complex I functions in the transfer of electrons from NADH to the respiratory chain. The immediate electron acceptor for the enzyme is believed to be ubiquinone. The protein is NADH-ubiquinone oxidoreductase chain 1 (NAD1) of Candida albicans (strain SC5314 / ATCC MYA-2876) (Yeast).